A 201-amino-acid polypeptide reads, in one-letter code: LexA repressor 1 (201 aa).

Positions Leu28–Glu48 form a DNA-binding region, H-T-H motif. Active-site for autocatalytic cleavage activity residues include Ser120 and Lys157.

Belongs to the peptidase S24 family. As to quaternary structure, homodimer.

The enzyme catalyses Hydrolysis of Ala-|-Gly bond in repressor LexA.. Functionally, represses a number of genes involved in the response to DNA damage (SOS response), including recA and lexA. In the presence of single-stranded DNA, RecA interacts with LexA causing an autocatalytic cleavage which disrupts the DNA-binding part of LexA, leading to derepression of the SOS regulon and eventually DNA repair. The polypeptide is LexA repressor 1 (Geobacter sulfurreducens (strain ATCC 51573 / DSM 12127 / PCA)).